The chain runs to 65 residues: Conotoxin Lp5.1 (65 aa).

Positions 1–22 (MRCVPVFIILLLLIPSAPSVDA) are cleaved as a signal peptide. The propeptide occupies 23–50 (QRKTKDDVPLASFHDNAKRTLKRLWNKR).

The protein belongs to the conotoxin T superfamily. In terms of processing, contains 2 disulfide bonds that can be either 'C1-C3, C2-C4' or 'C1-C4, C2-C3', since these disulfide connectivities have been observed for conotoxins with cysteine framework V (for examples, see AC P0DQQ7 and AC P81755). In terms of tissue distribution, expressed by the venom duct.

It localises to the secreted. The polypeptide is Conotoxin Lp5.1 (Conus leopardus (Leopard cone)).